A 330-amino-acid chain; its full sequence is DNA-directed RNA polymerase subunit alpha (330 aa).

An alpha N-terminal domain (alpha-NTD) region spans residues 1-229 (MKNIKFIKPF…DHFNVLVELS (229 aa)). Residues 245–330 (AHNSVLDLEI…HSVEEDKDKH (86 aa)) are alpha C-terminal domain (alpha-CTD).

This sequence belongs to the RNA polymerase alpha chain family. Homodimer. The RNAP catalytic core consists of 2 alpha, 1 beta, 1 beta' and 1 omega subunit. When a sigma factor is associated with the core the holoenzyme is formed, which can initiate transcription.

The enzyme catalyses RNA(n) + a ribonucleoside 5'-triphosphate = RNA(n+1) + diphosphate. Functionally, DNA-dependent RNA polymerase catalyzes the transcription of DNA into RNA using the four ribonucleoside triphosphates as substrates. The protein is DNA-directed RNA polymerase subunit alpha of Onion yellows phytoplasma (strain OY-M).